A 308-amino-acid chain; its full sequence is tRNA dimethylallyltransferase (308 aa).

8-15 contacts ATP; it reads GPTGTGKS. 10 to 15 is a substrate binding site; sequence TGTGKS.

Belongs to the IPP transferase family. As to quaternary structure, monomer. Mg(2+) serves as cofactor.

The enzyme catalyses adenosine(37) in tRNA + dimethylallyl diphosphate = N(6)-dimethylallyladenosine(37) in tRNA + diphosphate. Catalyzes the transfer of a dimethylallyl group onto the adenine at position 37 in tRNAs that read codons beginning with uridine, leading to the formation of N6-(dimethylallyl)adenosine (i(6)A). In Mycolicibacterium vanbaalenii (strain DSM 7251 / JCM 13017 / BCRC 16820 / KCTC 9966 / NRRL B-24157 / PYR-1) (Mycobacterium vanbaalenii), this protein is tRNA dimethylallyltransferase.